Reading from the N-terminus, the 224-residue chain is Ribosome maturation factor RimM (224 aa).

The segment covering 1-12 (MARRPGSSSRGP) has biased composition (low complexity). Disordered stretches follow at residues 1-46 (MARR…PSLV) and 204-224 (VADPPEDLFAPPGPKPADDPG). The PRC barrel domain maps to 137–211 (EDEFFLTDLI…KVVADPPEDL (75 aa)).

This sequence belongs to the RimM family. As to quaternary structure, binds ribosomal protein uS19.

It is found in the cytoplasm. Its function is as follows. An accessory protein needed during the final step in the assembly of 30S ribosomal subunit, possibly for assembly of the head region. Essential for efficient processing of 16S rRNA. May be needed both before and after RbfA during the maturation of 16S rRNA. It has affinity for free ribosomal 30S subunits but not for 70S ribosomes. The polypeptide is Ribosome maturation factor RimM (Methylorubrum populi (strain ATCC BAA-705 / NCIMB 13946 / BJ001) (Methylobacterium populi)).